The primary structure comprises 791 residues: Lon protease (791 aa).

A Lon N-terminal domain is found at 13–203 (LPVLVEDELF…KLIDLIAQEI (191 aa)). 364 to 371 (GPPGVGKT) is a binding site for ATP. The region spanning 600-791 (ENQVGQVNGL…FSDVLEYTLV (192 aa)) is the Lon proteolytic domain. Catalysis depends on residues Ser-697 and Lys-740.

Belongs to the peptidase S16 family. Homohexamer. Organized in a ring with a central cavity.

Its subcellular location is the cytoplasm. It catalyses the reaction Hydrolysis of proteins in presence of ATP.. Its function is as follows. ATP-dependent serine protease that mediates the selective degradation of mutant and abnormal proteins as well as certain short-lived regulatory proteins. Required for cellular homeostasis and for survival from DNA damage and developmental changes induced by stress. Degrades polypeptides processively to yield small peptide fragments that are 5 to 10 amino acids long. Binds to DNA in a double-stranded, site-specific manner. This chain is Lon protease, found in Campylobacter jejuni subsp. jejuni serotype O:2 (strain ATCC 700819 / NCTC 11168).